The sequence spans 356 residues: Probable dual-specificity RNA methyltransferase RlmN (356 aa).

Glu-92 functions as the Proton acceptor in the catalytic mechanism. A Radical SAM core domain is found at 98–336 (HKYGFSVCVT…CGVRLEHGTD (239 aa)). Cys-105 and Cys-341 form a disulfide bridge. 3 residues coordinate [4Fe-4S] cluster: Cys-112, Cys-116, and Cys-119. S-adenosyl-L-methionine-binding positions include 164-165 (GE), Ser-196, 219-221 (SLH), and Asn-297. The S-methylcysteine intermediate role is filled by Cys-341.

The protein belongs to the radical SAM superfamily. RlmN family. The cofactor is [4Fe-4S] cluster.

Its subcellular location is the cytoplasm. It carries out the reaction adenosine(2503) in 23S rRNA + 2 reduced [2Fe-2S]-[ferredoxin] + 2 S-adenosyl-L-methionine = 2-methyladenosine(2503) in 23S rRNA + 5'-deoxyadenosine + L-methionine + 2 oxidized [2Fe-2S]-[ferredoxin] + S-adenosyl-L-homocysteine. It catalyses the reaction adenosine(37) in tRNA + 2 reduced [2Fe-2S]-[ferredoxin] + 2 S-adenosyl-L-methionine = 2-methyladenosine(37) in tRNA + 5'-deoxyadenosine + L-methionine + 2 oxidized [2Fe-2S]-[ferredoxin] + S-adenosyl-L-homocysteine. Its function is as follows. Specifically methylates position 2 of adenine 2503 in 23S rRNA and position 2 of adenine 37 in tRNAs. In Shouchella clausii (strain KSM-K16) (Alkalihalobacillus clausii), this protein is Probable dual-specificity RNA methyltransferase RlmN.